We begin with the raw amino-acid sequence, 472 residues long: Ras-GEF domain-containing family member 1B (472 aa).

In terms of domain architecture, N-terminal Ras-GEF spans 34 to 164; sequence QDNNLLSGSL…IIQNLIRKLA (131 aa). Residues 204 to 452 form the Ras-GEF domain; that stretch reads DPYTVAQQLT…YLASYESEGP (249 aa).

Guanine nucleotide exchange factor (GEF) with specificity for rap2a and other Ras family proteins (in vitro). This chain is Ras-GEF domain-containing family member 1B (rasgef1b), found in Xenopus tropicalis (Western clawed frog).